We begin with the raw amino-acid sequence, 65 residues long: Large ribosomal subunit protein bL35 (65 aa).

Belongs to the bacterial ribosomal protein bL35 family.

This Caldicellulosiruptor saccharolyticus (strain ATCC 43494 / DSM 8903 / Tp8T 6331) protein is Large ribosomal subunit protein bL35.